The sequence spans 138 residues: Envelope glycoprotein N (138 aa).

The signal sequence occupies residues M1–G21. At N22–S101 the chain is on the virion surface side. Residues F102–L122 traverse the membrane as a helical segment. Over R123–Y138 the chain is Intravirion.

This sequence belongs to the herpesviridae glycoprotein N family. As to quaternary structure, interacts (via N-terminus) with gM (via N-terminus). The gM-gN heterodimer forms the gCII complex. Post-translationally, O-glycosylated.

It is found in the virion membrane. The protein resides in the host membrane. The protein localises to the host Golgi apparatus. It localises to the host trans-Golgi network. In terms of biological role, envelope glycoprotein necessary for proper maturation of gM and modulation of its membrane fusion activity. Also plays a critical role in virion morphogenesis. This is Envelope glycoprotein N from Human cytomegalovirus (strain AD169) (HHV-5).